Reading from the N-terminus, the 1257-residue chain is Endochitinase A (1257 aa).

The signal sequence occupies residues 1-21 (MVFKPLTIAAAIAGLTPFVSA). Positions 28-339 (SNVAVYYGQG…DVIKDILVAV (312 aa)) constitute a GH18 domain. Glutamate 175 serves as the catalytic Proton donor. Disordered stretches follow at residues 364–429 (TPVA…STPV), 595–980 (TPAA…LAPI), and 1141–1174 (DALT…PTTT). Residues 595–696 (TPAASSSPAV…STPVRSTSSV (102 aa)) are compositionally biased toward low complexity. Over residues 700-715 (KSSSAPVIPKPSSTVI) the composition is skewed to polar residues. Over residues 716–935 (ATFTSSSGSL…ASGSGAQDST (220 aa)) the composition is skewed to low complexity. An N-linked (GlcNAc...) asparagine glycan is attached at asparagine 825. Positions 940–964 (HASTLSPSYSTPLASASGQTGSPTT) are enriched in polar residues. N-linked (GlcNAc...) asparagine glycosylation is present at asparagine 973. Residues 1145-1154 (ASPSGSQPAG) show a composition bias toward polar residues. Positions 1156–1174 (SSPGQSAPTAPASTAPTTT) are enriched in low complexity. A lipid anchor (GPI-anchor amidated glycine) is attached at glycine 1231. A propeptide spans 1232-1257 (AASRVSRLQHGAGAVSAFALFLLAAI) (removed in mature form).

The protein belongs to the glycosyl hydrolase 18 family. Chitinase class III subfamily. O-glycosylated.

It is found in the cell membrane. The protein resides in the secreted. Its subcellular location is the cell wall. It carries out the reaction Random endo-hydrolysis of N-acetyl-beta-D-glucosaminide (1-&gt;4)-beta-linkages in chitin and chitodextrins.. GPI-anchored chitinase involved in the degradation of chitin, a component of the cell walls of fungi and exoskeletal elements of some animals (including worms and arthropods). Required to reshape the cell wall at the sites where cell wall remodeling and/or cell wall maturation actively take place such as sites of conidia formation. The polypeptide is Endochitinase A (ctcA) (Aspergillus niger (strain ATCC MYA-4892 / CBS 513.88 / FGSC A1513)).